Here is a 124-residue protein sequence, read N- to C-terminus: Protein S100-A16 (124 aa).

An EF-hand 1; degenerate domain is found at 23-37 (VSKHSLVKNKISKSS). In terms of domain architecture, EF-hand 2 spans 54 to 89 (GNRKAADKLIQNLDANHDGRICFDEYWTMIGGITSP). 5 residues coordinate Ca(2+): aspartate 67, asparagine 69, aspartate 71, arginine 73, and glutamate 78. The segment at 97–124 (QECQQESQQECQQESQQESQQESQQGSS) is disordered.

The protein belongs to the S-100 family. As to quaternary structure, homodimer. Interacts with TP53. In terms of tissue distribution, ubiquitous. Widely distributed throughout the adult brain and predominantly expressed within specific astrocyte populations. Expressed at high level in adipose tissues of obese animals.

It localises to the nucleus. The protein resides in the nucleolus. It is found in the cytoplasm. Calcium-binding protein. Binds one calcium ion per monomer. Can promote differentiation of adipocytes (in vitro). Overexpression in 3T3-L1 preadipocytes increases their proliferation, enhances adipogenesis and reduces insulin-stimulated glucose uptake. This chain is Protein S100-A16, found in Mus musculus (Mouse).